We begin with the raw amino-acid sequence, 315 residues long: WD repeat domain-containing protein 83 (315 aa).

7 WD repeats span residues Cys23–Thr62, Gly65–Lys104, Gly107–Val146, Glu151–Asp188, Val190–Glu228, Gly231–Ala272, and Val275–Gly313.

The protein belongs to the WD repeat MORG1 family. Interacts with EGLN3/PHD3. Interacts with ERK signaling proteins MAP2K1/MEK1, MAP2K2/MEK2, LAMTOR3, ARAF/Raf-1, MAPK1/ERK2 and MAPK3/ERK1. Identified in the spliceosome C complex. Interacts with PARD6B and CRB3. Interacts strongly with GTP-bound RRAGA but not with inactive GDP-bound. Interacts with p62/SQSTM1. Ubiquitous.

It localises to the cytoplasm. It is found in the lysosome. The protein resides in the nucleus. In terms of biological role, molecular scaffold protein for various multimeric protein complexes. Acts as a module in the assembly of a multicomponent scaffold for the ERK pathway, linking ERK responses to specific agonists. At low concentrations it enhances ERK activation, whereas high concentrations lead to the inhibition of ERK activation. Also involved in response to hypoxia by acting as a negative regulator of HIF1A/HIF-1-alpha via its interaction with EGLN3/PHD3. May promote degradation of HIF1A. May act by recruiting signaling complexes to a specific upstream activator. May also be involved in pre-mRNA splicing. Participates in tight junction development by regulating apico-basal polarity, a key step in tissue development and organization. Mechanistically, regulates the translocation of PAR6-aPKC from the cytoplasm to the apical surface by acting as an adapter between PARD6B AND CRB3. Also acts as a negative regulator of mTORC1 under nutrient-rich conditions by binding to the active Rag GTPases to inhibit mTORC1 localization to the lysosome and phosphorylation of downstream targets. This facilitates constitutive basal autophagy during nutrient availability. This Mus musculus (Mouse) protein is WD repeat domain-containing protein 83 (Wdr83).